Consider the following 311-residue polypeptide: RNA polymerase sigma factor SigA4 (311 aa).

Residues M78–T148 form a sigma-70 factor domain-2 region. An Interaction with polymerase core subunit RpoC motif is present at residues D102 to Q105. Residues E157 to A234 form a sigma-70 factor domain-3 region. Residues W247–Q304 are sigma-70 factor domain-4. A DNA-binding region (H-T-H motif) is located at residues L273 to A292.

The protein belongs to the sigma-70 factor family.

It is found in the cytoplasm. In terms of biological role, sigma factors are initiation factors that promote the attachment of RNA polymerase to specific initiation sites and are then released. The protein is RNA polymerase sigma factor SigA4 (sigA4) of Synechococcus elongatus (strain ATCC 33912 / PCC 7942 / FACHB-805) (Anacystis nidulans R2).